A 566-amino-acid chain; its full sequence is Cytokine-like nuclear factor N-PAC (566 aa).

One can recognise a PWWP domain in the interval 9–70 (VNDLVWAKMK…ETQIKPYLQF (62 aa)). 2 disordered regions span residues 127–147 (VASGTEESGAEDGASVNNTTT) and 206–234 (MLDDGVSGAPSPKRKKKLLNDSGELSSLD). Positions 274–566 (RNIKASQLKF…ASAVYVRARF (293 aa)) are dehydrogenase domain. NAD(+) contacts are provided by residues 284-298 (GFLGLGVMGCGIVKN) and Lys518.

It belongs to the HIBADH-related family. NP60 subfamily. As to quaternary structure, binds to mononucleosomes. Interacts with male-specific lethal (MSL) histone acetyltransferase complex at least composed of mof, msl-1, msl-2 and msl-3.

It localises to the chromosome. Its function is as follows. May have oxidoreductase activity. In Anopheles gambiae (African malaria mosquito), this protein is Cytokine-like nuclear factor N-PAC.